The primary structure comprises 308 residues: Mitochondrial import receptor subunit TOM40B (308 aa).

The interval 281 to 308 (PLPVTLALGAFLNHWRNRFHCGFSITVG) is required for mitochondrial targeting.

It belongs to the Tom40 family. As to quaternary structure, forms part of the preprotein translocase of the outer mitochondrial membrane (TOM complex) containing TOMM22, TOMM40, TOMM40L and TOMM70. Interacts with mitochondrial targeting sequences. As to expression, widely expressed. Higher levels in heart, brain and liver, very low level in testis.

The protein resides in the mitochondrion outer membrane. Functionally, potential channel-forming protein implicated in import of protein precursors into mitochondria. The polypeptide is Mitochondrial import receptor subunit TOM40B (Rattus norvegicus (Rat)).